Reading from the N-terminus, the 227-residue chain is PKHD-type hydroxylase azo0608 (227 aa).

One can recognise a Fe2OG dioxygenase domain in the interval 78–178; that stretch reads RVLTPFFNRY…RVACFMFMQS (101 aa). The Fe cation site is built by H97, D99, and H159. Residue R169 participates in 2-oxoglutarate binding.

Fe(2+) serves as cofactor. L-ascorbate is required as a cofactor.

This Azoarcus sp. (strain BH72) protein is PKHD-type hydroxylase azo0608.